We begin with the raw amino-acid sequence, 605 residues long: MKEIGSKPRKLLPLCFIIFLCFCSSVMAADEDDIRCLRGLKASLTDPQNALKSWNFDNTTLGFLCNFVGVSCWNNQENRVINLELRDMGLSGKIPDSLQYCASLQKLDLSSNRLSGNIPTELCNWLPFLVSLDLSNNELNGEIPPDLAKCSFVNSLVLSDNRLSGQIPVQFSALGRLGRFSVANNDLSGRIPVFFSSPSYSSDDFSGNKGLCGRPLSSSCGGLSKKNLGIIIAAGVFGAAASMLLAFGIWWYYHLKWTRRRRSGLTEVGVSGLAQRLRSHKLTQVSLFQKPLVKVKLGDLMAATNNFNSENIIVSTRTGTTYKALLPDGSALAVKHLSTCKLGEREFRYEMNQLWELRHSNLAPLLGFCVVEEEKFLVYKYMSNGTLHSLLDSNRGELDWSTRFRIGLGAARGLAWLHHGCRPPILHQNICSSVILIDEDFDARIIDSGLARLMVPSDNNESSFMTGDLGEFGYVAPEYSTTMLASLKGDVYGLGVVLLELATGLKAVGGEGFKGSLVDWVKQLESSGRIAETFDENIRGKGHDEEISKFVEIALNCVSSRPKERWSMFQAYQSLKAIAEKQGYSFSEQDDDFPLIFDTQENEKV.

The signal sequence occupies residues 1 to 28 (MKEIGSKPRKLLPLCFIIFLCFCSSVMA). The Extracellular portion of the chain corresponds to 29–229 (ADEDDIRCLR…CGGLSKKNLG (201 aa)). Asparagine 58 carries an N-linked (GlcNAc...) asparagine glycan. LRR repeat units lie at residues 101–125 (CASL…LCNW), 127–150 (PFLV…LAKC), 152–173 (FVNS…QFSA), and 174–197 (LGRL…FFSS). Residues 230 to 250 (IIIAAGVFGAAASMLLAFGIW) traverse the membrane as a helical segment. At 251–605 (WYYHLKWTRR…IFDTQENEKV (355 aa)) the chain is on the cytoplasmic side. Serine 271 is subject to Phosphoserine; by BAK1. The residue at position 283 (threonine 283) is a Phosphothreonine; by BAK1. Serine 286 is modified (phosphoserine; by BAK1). Threonine 304 bears the Phosphothreonine; by BAK1 mark. One can recognise a Protein kinase domain in the interval 307–578 (FNSENIIVST…FQAYQSLKAI (272 aa)). An ATP-binding site is contributed by 313–321 (IVSTRTGTT). Serine 330 bears the Phosphoserine; by BAK1 mark. ATP is bound at residue lysine 335. Serine 389 is subject to Phosphoserine; by BAK1. The residue at position 402 (threonine 402) is a Phosphothreonine. Residues serine 448 and serine 462 each carry the phosphoserine; by BAK1 modification. Threonine 466 carries the post-translational modification Phosphothreonine; by BAK1. At tyrosine 479 the chain carries Phosphotyrosine. Position 482 is a phosphothreonine (threonine 482). Serine 486 carries the phosphoserine modification. The residue at position 533 (threonine 533) is a Phosphothreonine; by BAK1.

It belongs to the protein kinase superfamily. Ser/Thr protein kinase family. As to quaternary structure, interacts constitutively with BAK1, when phosphorylated, thereby preventing interaction with the ligand-binding LRR-RLK FLS2. Upon infection, pathogen-associated molecular patterns (PAMP) perception leads to BIR2 release from the BAK1 complex and enables the recruitment of BAK1 into the FLS2 complex. In terms of processing, phosphorylated by BAK1, this interacts promotes interaction with BAK1.

It is found in the cell membrane. Its function is as follows. Pseudokinases lacking protein kinase activity and unable to bind ATP-analogs. Negative regulator of pathogen-associated molecular patterns- (PAMP-) triggered immunity by limiting BAK1-receptor complex formation in the absence of ligands. The sequence is that of Inactive LRR receptor-like serine/threonine-protein kinase BIR2 from Arabidopsis thaliana (Mouse-ear cress).